The following is a 561-amino-acid chain: Dihydroxy-acid dehydratase (561 aa).

Cys-51 provides a ligand contact to [2Fe-2S] cluster. Asp-83 contributes to the Mg(2+) binding site. Residue Cys-124 participates in [2Fe-2S] cluster binding. Positions 125 and 126 each coordinate Mg(2+). N6-carboxylysine is present on Lys-126. Cys-196 contributes to the [2Fe-2S] cluster binding site. Glu-448 is a binding site for Mg(2+). Catalysis depends on Ser-473, which acts as the Proton acceptor.

It belongs to the IlvD/Edd family. Homodimer. [2Fe-2S] cluster is required as a cofactor. Requires Mg(2+) as cofactor.

The enzyme catalyses (2R)-2,3-dihydroxy-3-methylbutanoate = 3-methyl-2-oxobutanoate + H2O. It catalyses the reaction (2R,3R)-2,3-dihydroxy-3-methylpentanoate = (S)-3-methyl-2-oxopentanoate + H2O. The protein operates within amino-acid biosynthesis; L-isoleucine biosynthesis; L-isoleucine from 2-oxobutanoate: step 3/4. Its pathway is amino-acid biosynthesis; L-valine biosynthesis; L-valine from pyruvate: step 3/4. Its function is as follows. Functions in the biosynthesis of branched-chain amino acids. Catalyzes the dehydration of (2R,3R)-2,3-dihydroxy-3-methylpentanoate (2,3-dihydroxy-3-methylvalerate) into 2-oxo-3-methylpentanoate (2-oxo-3-methylvalerate) and of (2R)-2,3-dihydroxy-3-methylbutanoate (2,3-dihydroxyisovalerate) into 2-oxo-3-methylbutanoate (2-oxoisovalerate), the penultimate precursor to L-isoleucine and L-valine, respectively. In Sulfolobus acidocaldarius (strain ATCC 33909 / DSM 639 / JCM 8929 / NBRC 15157 / NCIMB 11770), this protein is Dihydroxy-acid dehydratase.